The sequence spans 54 residues: MEFLNANFGASLIQSKHKTTKKHNLVNSCCCSKPAEKPTNSCTCSKCACDSCKC.

Belongs to the metallothionein superfamily. Type 11 family.

The protein is Metallothionein-4 (MTP4) of Yarrowia lipolytica (strain CLIB 122 / E 150) (Yeast).